Here is a 70-residue protein sequence, read N- to C-terminus: U2-agatoxin-Ao1b (70 aa).

A signal peptide spans 1-20 (MRAIISLILISAMVFSMIAA). Positions 21–34 (VPEEEGLQLSEDER) are excised as a propeptide. Intrachain disulfides connect Cys37/Cys53, Cys44/Cys58, and Cys52/Cys68. Leu69 is modified (leucine amide).

This sequence belongs to the neurotoxin 01 (U2-agtx) family. As to expression, expressed by the venom gland.

It localises to the secreted. In terms of biological role, insect active toxin causing rapid but reversible paralysis in crickets. No activity shown in mammals. Does not show effect on mammalian voltage-gated calcium channels. This chain is U2-agatoxin-Ao1b, found in Agelena orientalis (Funnel-web spider).